The chain runs to 308 residues: Aspartate carbamoyltransferase catalytic subunit (308 aa).

Arg59 and Thr60 together coordinate carbamoyl phosphate. Lys87 lines the L-aspartate pocket. Carbamoyl phosphate-binding residues include Arg109, His139, and Gln142. 2 residues coordinate L-aspartate: Arg172 and Arg224. 2 residues coordinate carbamoyl phosphate: Ala265 and Pro266.

It belongs to the aspartate/ornithine carbamoyltransferase superfamily. ATCase family. As to quaternary structure, heterododecamer (2C3:3R2) of six catalytic PyrB chains organized as two trimers (C3), and six regulatory PyrI chains organized as three dimers (R2).

It carries out the reaction carbamoyl phosphate + L-aspartate = N-carbamoyl-L-aspartate + phosphate + H(+). It functions in the pathway pyrimidine metabolism; UMP biosynthesis via de novo pathway; (S)-dihydroorotate from bicarbonate: step 2/3. Its function is as follows. Catalyzes the condensation of carbamoyl phosphate and aspartate to form carbamoyl aspartate and inorganic phosphate, the committed step in the de novo pyrimidine nucleotide biosynthesis pathway. This is Aspartate carbamoyltransferase catalytic subunit from Streptococcus thermophilus (strain ATCC BAA-491 / LMD-9).